The chain runs to 287 residues: Toxin zeta (287 aa).

Position 40–47 (40–47 (GQPGSGKT)) interacts with ATP. Asparagine 66 is a binding site for substrate. The active-site Proton acceptor is the aspartate 67. Glutamate 100, threonine 118, arginine 120, and threonine 128 together coordinate substrate. The tract at residues 267–287 (KLESLQPPTPPIPKTPKLPGI) is disordered. Over residues 273–287 (PPTPPIPKTPKLPGI) the composition is skewed to pro residues.

Belongs to the zeta toxin family. In terms of assembly, in the presence of the epsilon antitoxin forms an inactive PezA(2)PezT(2) heterotetramer. The heterotetramer is still able to bind the UNAG substrate.

It carries out the reaction UDP-N-acetyl-alpha-D-glucosamine + ATP = UDP-N-acetyl-alpha-D-glucosamine 3'-phosphate + ADP + H(+). In terms of biological role, toxic component of a type II toxin-antitoxin (TA) system. Phosphorylates UDP-N-acetyl-D-glucosamine (UNAG) on the 3'-hydroxyl group of the N-acetyl-D-glucosamine moiety, yielding UNAG-3P. UNAG-3P inhibits MurA, the first committed step in cell wall synthesis, which is then blocked. Phosphorylation is inhibited by cognate epsilon antitoxin. Part of a postsegregational killing (PSK) system involved in the killing of plasmid-free cells. The zeta toxin induces programmed cell death. This chain is Toxin zeta, found in Streptococcus pyogenes.